The following is a 1032-amino-acid chain: Protein phosphatase 1 regulatory subunit 12A (1032 aa).

The KVKF motif motif lies at 35–38 (KVKF). ANK repeat units follow at residues 39 to 68 (DDGAVFLAACSSGDTDEVLKLLHRGADINY), 72 to 101 (DGLTALHQACIDDNVDMVKFLVENGANINQ), 105 to 134 (EGWIPLHAAASCGYLDIAEFLIGQGAHVGA), 138 to 164 (EGDTPLDIAEEEAMEELLQNEVNRQGV), 198 to 227 (SGGTALHVAAAKGYTEVLKLLIQAGYDVNI), and 231 to 260 (DGWTPLHAAAHWGKEEACRILVDNLCDMET). 2 positions are modified to (3S)-3-hydroxyasparagine; by HIF1AN: Asn-67 and Asn-100. Asn-226 bears the (3S)-3-hydroxyasparagine; by HIF1AN mark. Disordered stretches follow at residues 290-553 (LHSE…HRSC) and 588-928 (SSTS…RLEK). The segment covering 291 to 300 (HSEKRDKKSP) has biased composition (basic and acidic residues). The residue at position 299 (Ser-299) is a Phosphoserine. A compositionally biased stretch (polar residues) spans 302–316 (IESTANMENNQPQKT). Residues 318–340 (KNKETLIIEPEKNASRIESLEQE) are compositionally biased toward basic and acidic residues. Residues 357–369 (SEEDEEDDSESEA) are compositionally biased toward acidic residues. A compositionally biased stretch (low complexity) spans 383-399 (AHTASTQAAPAAVTTPT). Residues 400–421 (LSSNQGTPTSPVKKFPTSTTKI) show a composition bias toward polar residues. A phosphoserine mark is found at Ser-422 and Ser-432. A compositionally biased stretch (basic and acidic residues) spans 422-432 (SPKEEERKDES). Position 443 is a phosphothreonine (Thr-443). Phosphoserine is present on Ser-445. Tyr-446 carries the post-translational modification Phosphotyrosine. Positions 469 to 480 (RSASSPRLSSSL) are enriched in low complexity. At Ser-472 the chain carries Phosphoserine; by NUAK1. Ser-473 bears the Phosphoserine; by CDK1 mark. Ser-477 carries the post-translational modification Phosphoserine. Basic and acidic residues predominate over residues 481 to 491 (DNKEKEKDNKG). A phosphoserine mark is found at Ser-507 and Ser-509. Residues 540-551 (NSSINEGSTYHR) show a composition bias toward polar residues. The residue at position 601 (Ser-601) is a Phosphoserine. Residues 602 to 612 (PAGTQSSTSNR) show a composition bias toward polar residues. Basic and acidic residues predominate over residues 614-625 (WAEDSTEKEKDS). A Phosphoserine modification is found at Ser-618. The span at 633–661 (LVAPTVVSAAASSTTALTTTTAGTLSSTS) shows a compositional bias: low complexity. The span at 674 to 683 (VRDEESESQR) shows a compositional bias: basic and acidic residues. Residues 683-866 (RKARSRQARQ…VSFWTQDSDE (184 aa)) are interaction with ROCK2. The span at 684–694 (KARSRQARQSR) shows a compositional bias: basic residues. Phosphoserine; by PKA and PKG; in vitro occurs at positions 693 and 696. Thr-697 carries the post-translational modification Phosphothreonine; by ROCK1, ROCK2, CDC42BP, ZIPK/DAPK3 and RAF1. Positions 719-768 (RTREQENEEKDKEEKEKQDKEKQEEKKESEVSREDEYKQKYSRTYDETYA) are enriched in basic and acidic residues. A compositionally biased stretch (low complexity) spans 774–797 (STSSSSTPSSSSLSTLGSSLYASS). A compositionally biased stretch (polar residues) spans 798 to 812 (QLNRPNSLVGITSAY). Residue Ser-804 is modified to Phosphoserine. Residues 816–842 (LTKDNEREGEKKEEEKEGEDKSQPKSI) are compositionally biased toward basic and acidic residues. The segment covering 843–854 (RERRRPREKRRS) has biased composition (basic residues). Phosphoserine; by ROCK2 is present on Ser-854. Phosphoserine occurs at positions 864 and 873. Residues 869–885 (QERQSDTEDGSSKRDTQ) are compositionally biased toward basic and acidic residues. Low complexity predominate over residues 886–900 (TDSVSRYDSSSTSSS). Phosphoserine is present on residues Ser-905 and Ser-910. Ser-912 is modified (phosphoserine; by NUAK1). A compositionally biased stretch (basic and acidic residues) spans 916-928 (LEERKPYGSRLEK). Ser-997 is modified (phosphoserine).

PP1 comprises a catalytic subunit, PPP1CA, PPP1CB or PPP1CC, and one or several targeting or regulatory subunits. PPP1R12A mediates binding to myosin. Interacts with ARHA and CIT. Binds PPP1R12B, ROCK1 and IL16. Interacts directly with PRKG1. Non-covalent dimer of 2 dimers; PRKG1-PRKG1 and PPP1R12A-PPP1R12A. Interacts with SMTNL1. Interacts with PPP1CB; the interaction is direct. Interacts (when phosphorylated at Ser-445, Ser-472 and Ser-910) with 14-3-3. Interacts with ROCK1 and ROCK2. Interacts with isoform 1 and isoform 2 of ZIPK/DAPK3. Interacts with RAF1. Interacts with HIF1AN. Interacts with NCKAP1L. In terms of processing, phosphorylated on upon DNA damage, probably by ATM or ATR. Phosphorylated by CIT (Rho-associated kinase). Phosphorylated cooperatively by ROCK1 and CDC42BP on Thr-697. In vitro, phosphorylation of Ser-696 by PKA and PKG appears to prevent phosphorylation of the inhibitory site Thr-697, probably mediated by PRKG1. May be phosphorylated at Thr-697 by DMPK; may inhibit the myosin phosphatase activity. Phosphorylated at Ser-473 by CDK1 during mitosis, creating docking sites for the POLO box domains of PLK1. Subsequently, PLK1 binds and phosphorylates PPP1R12A. Smooth muscle. Detected in aorta, portal vein, stomach, intestine, bladder and lung.

The protein localises to the cytoplasm. It is found in the cytoskeleton. The protein resides in the stress fiber. Key regulator of protein phosphatase 1C (PPP1C). Mediates binding to myosin. As part of the PPP1C complex, involved in dephosphorylation of PLK1. Capable of inhibiting HIF1AN-dependent suppression of HIF1A activity. The polypeptide is Protein phosphatase 1 regulatory subunit 12A (Rattus norvegicus (Rat)).